The primary structure comprises 586 residues: Proteasome-associated ATPase (586 aa).

Residues Ala11–Gln76 are a coiled coil. Residue Gly273–Leu278 participates in ATP binding. The docks into pockets in the proteasome alpha-ring stretch occupies residues Tyr585 to Leu586.

The protein belongs to the AAA ATPase family. In terms of assembly, homohexamer. Assembles into a hexameric ring structure that caps the 20S proteasome core. Strongly interacts with the prokaryotic ubiquitin-like protein Pup through a hydrophobic interface; the interacting region of ARC lies in its N-terminal coiled-coil domain. There is one Pup binding site per ARC hexamer ring. Upon ATP-binding, the C-terminus of ARC interacts with the alpha-rings of the proteasome core, possibly by binding to the intersubunit pockets.

Its pathway is protein degradation; proteasomal Pup-dependent pathway. In terms of biological role, ATPase which is responsible for recognizing, binding, unfolding and translocation of pupylated proteins into the bacterial 20S proteasome core particle. May be essential for opening the gate of the 20S proteasome via an interaction with its C-terminus, thereby allowing substrate entry and access to the site of proteolysis. Thus, the C-termini of the proteasomal ATPase may function like a 'key in a lock' to induce gate opening and therefore regulate proteolysis. The sequence is that of Proteasome-associated ATPase from Nocardia farcinica (strain IFM 10152).